A 1171-amino-acid chain; its full sequence is DNA-directed RNA polymerase subunit beta (1171 aa).

Belongs to the RNA polymerase beta chain family. In terms of assembly, the RNAP catalytic core consists of 2 alpha, 1 beta, 1 beta' and 1 omega subunit. When a sigma factor is associated with the core the holoenzyme is formed, which can initiate transcription.

The catalysed reaction is RNA(n) + a ribonucleoside 5'-triphosphate = RNA(n+1) + diphosphate. Its function is as follows. DNA-dependent RNA polymerase catalyzes the transcription of DNA into RNA using the four ribonucleoside triphosphates as substrates. In Corynebacterium efficiens (strain DSM 44549 / YS-314 / AJ 12310 / JCM 11189 / NBRC 100395), this protein is DNA-directed RNA polymerase subunit beta.